A 602-amino-acid polypeptide reads, in one-letter code: NADH-quinone oxidoreductase subunit C/D (602 aa).

The segment at 1–192 (MVNNMTDLTA…DPFELTKAKQ (192 aa)) is NADH dehydrogenase I subunit C. The NADH dehydrogenase I subunit D stretch occupies residues 216-602 (DFMFLNLGPN…IDFVMSDVDR (387 aa)).

In the N-terminal section; belongs to the complex I 30 kDa subunit family. It in the C-terminal section; belongs to the complex I 49 kDa subunit family. In terms of assembly, NDH-1 is composed of 13 different subunits. Subunits NuoB, CD, E, F, and G constitute the peripheral sector of the complex.

It is found in the cell inner membrane. The catalysed reaction is a quinone + NADH + 5 H(+)(in) = a quinol + NAD(+) + 4 H(+)(out). In terms of biological role, NDH-1 shuttles electrons from NADH, via FMN and iron-sulfur (Fe-S) centers, to quinones in the respiratory chain. The immediate electron acceptor for the enzyme in this species is believed to be ubiquinone. Couples the redox reaction to proton translocation (for every two electrons transferred, four hydrogen ions are translocated across the cytoplasmic membrane), and thus conserves the redox energy in a proton gradient. This Klebsiella pneumoniae subsp. pneumoniae (strain ATCC 700721 / MGH 78578) protein is NADH-quinone oxidoreductase subunit C/D.